The following is a 537-amino-acid chain: GTPase LSG1-1 (537 aa).

The 205-residue stretch at 158-362 folds into the CP-type G domain; it reads WRQLWRVLER…LCDCPGLVFP (205 aa). Positions 176-180 match the DARXP motif motif; it reads DARDP. The G4 stretch occupies residues 206 to 209; it reads NKAD. 206 to 209 provides a ligand contact to GTP; the sequence is NKAD. Positions 234–236 are G5; it reads SAK. Residues 311 to 318 form a G1 region; that stretch reads GYPNVGKS. 314–319 is a GTP binding site; the sequence is NVGKSS. The segment at 337-341 is G2; it reads GKTKH. Residues 355 to 358 form a G3 region; sequence DCPG. Gly358 contacts GTP. The segment at 484–508 is disordered; the sequence is LGAETREGSQTEKKGEEAPSLGLDQ. Positions 487–500 are enriched in basic and acidic residues; sequence ETREGSQTEKKGEE.

The protein belongs to the TRAFAC class YlqF/YawG GTPase family. As to expression, ubiquitous, with the highest expression in stem and hypsophyll on day 66.

Its subcellular location is the cytoplasm. Functionally, GTPase that might be redundant with LSG1-2 for ribosome biogenesis. Binds to 23S rRNA. The chain is GTPase LSG1-1 from Arabidopsis thaliana (Mouse-ear cress).